The chain runs to 190 residues: Negative regulator YfiR (190 aa).

Residue Arg-60 coordinates GMP. 2 disulfide bridges follow: Cys-71/Cys-110 and Cys-145/Cys-152. GMP-binding residues include Arg-175 and His-177.

Homodimer. Interacts with TpbB/YfiN. Interacts with YfiB. The YfiB-YfiR complex is a 2:2 heterotetramer. Cys-71 and Cys-110 form a disulfide bond in the oxidized form but maintain their free form in the non-oxidized YfiR structure. The Cys-145-Cys-152 disulfide bond is well formed in both structures. The Cys145-Cys152 disulfide bond, but not Cys-71-Cys-110, plays an important role in maintaining the correct folding of the protein.

The protein localises to the periplasm. Its activity is regulated as follows. TpbB/YfiN repression is released through an YfiB-dependent sequestration of YfiR to the outer membrane. Binds vitamin B6 (VB6) or L-Trp at the periphery of the dimer, and both VB6 and L-Trp are able to reduce biofilm formation induced by YfiB L43P mutant. However, VB6 or L-Trp alone may have little effects in interrupting the YfiB-YfiR interaction. GMP enhances the binding affinity between YfiB and YfiR. Functionally, negatively regulates the activity of the diguanylate cyclase TpbB/YfiN, leading to decreased c-di-GMP production. Inhibits TpbB/YfiN allosterically, through a hydrophobic interaction between the C-terminus of YfiR and a conserved region of the periplasmic PAS domain of TpbB/YfiN. Under reducing conditions, may also act as an YfiB-independent sensing device that is able to activate TpbB/YfiN in response to the redox status of the periplasm. Its function is as follows. Part of the YfiB-TpbB-YfiR (or yfiBNR) system, encoding a tripartite signaling module that modulates intracellular c-di-GMP levels. The system is a key regulator of the small colony variant (SCV) phenotype, and plays an important role in biofilm formation and in vivo persistence. The c-di-GMP produced by TpbB/YfiN stimulates the production of the Pel and Psl exopolysaccharides, which promotes surface attachment, generates an SCV phenotype and confers resistance against phagocytosis. This chain is Negative regulator YfiR, found in Pseudomonas aeruginosa (strain ATCC 15692 / DSM 22644 / CIP 104116 / JCM 14847 / LMG 12228 / 1C / PRS 101 / PAO1).